The chain runs to 873 residues: Probable inorganic carbon transporter subunit DabA (873 aa).

4 residues coordinate Zn(2+): cysteine 393, aspartate 395, histidine 575, and cysteine 590.

This sequence belongs to the inorganic carbon transporter (TC 9.A.2) DabA family. As to quaternary structure, forms a complex with DabB. The cofactor is Zn(2+).

Its subcellular location is the cell membrane. Functionally, part of an energy-coupled inorganic carbon pump. In Bacillus licheniformis (strain ATCC 14580 / DSM 13 / JCM 2505 / CCUG 7422 / NBRC 12200 / NCIMB 9375 / NCTC 10341 / NRRL NRS-1264 / Gibson 46), this protein is Probable inorganic carbon transporter subunit DabA.